A 150-amino-acid chain; its full sequence is Urease subunit beta (150 aa).

A compositionally biased stretch (low complexity) spans 122–140 (GAVVGDSPAATPGTTGATG). Residues 122–150 (GAVVGDSPAATPGTTGATGDLPGYLGEGS) are disordered.

The protein belongs to the urease beta subunit family. In terms of assembly, heterotrimer of UreA (gamma), UreB (beta) and UreC (alpha) subunits. Three heterotrimers associate to form the active enzyme.

The protein resides in the cytoplasm. The enzyme catalyses urea + 2 H2O + H(+) = hydrogencarbonate + 2 NH4(+). Its pathway is nitrogen metabolism; urea degradation; CO(2) and NH(3) from urea (urease route): step 1/1. The polypeptide is Urease subunit beta (Frankia alni (strain DSM 45986 / CECT 9034 / ACN14a)).